The sequence spans 185 residues: NADH-quinone oxidoreductase subunit B (185 aa).

The [4Fe-4S] cluster site is built by Cys-64, Cys-65, Cys-129, and Cys-159.

Belongs to the complex I 20 kDa subunit family. As to quaternary structure, NDH-1 is composed of 14 different subunits. Subunits NuoB, C, D, E, F, and G constitute the peripheral sector of the complex. [4Fe-4S] cluster is required as a cofactor.

The protein localises to the cell inner membrane. It carries out the reaction a quinone + NADH + 5 H(+)(in) = a quinol + NAD(+) + 4 H(+)(out). Functionally, NDH-1 shuttles electrons from NADH, via FMN and iron-sulfur (Fe-S) centers, to quinones in the respiratory chain. Couples the redox reaction to proton translocation (for every two electrons transferred, four hydrogen ions are translocated across the cytoplasmic membrane), and thus conserves the redox energy in a proton gradient. This is NADH-quinone oxidoreductase subunit B from Rhodospirillum rubrum (strain ATCC 11170 / ATH 1.1.1 / DSM 467 / LMG 4362 / NCIMB 8255 / S1).